A 1530-amino-acid chain; its full sequence is Glutamate-rich protein 3 (1530 aa).

Disordered regions lie at residues 165–187 (RLQP…RSRS), 408–429 (SLPK…KAEG), 475–661 (MTSK…PMPI), 673–724 (TEKG…GLEE), 773–870 (EAME…AVGL), 923–1146 (REAA…LLGE), 1167–1334 (LENI…GMGG), 1360–1383 (LAGS…DVAE), and 1425–1530 (YTTE…NVQV). 3 stretches are compositionally biased toward basic and acidic residues: residues 415-429 (EKST…KAEG), 531-545 (LDDK…KESE), and 552-562 (PDARDNVKDEN). Acidic residues predominate over residues 563–574 (DGCSESELEEDK). Residues 581 to 592 (SSTSSRSHPYSS) are compositionally biased toward low complexity. Residues 600 to 616 (VGDREAHTDSSTDESAR) show a composition bias toward basic and acidic residues. A compositionally biased stretch (acidic residues) spans 638–647 (ESLEIEIEDQ). Composition is skewed to basic and acidic residues over residues 684–717 (LSEK…DKKA) and 773–787 (EAME…RDAD). Over residues 834–845 (GIERGAEGAAEA) the composition is skewed to low complexity. The span at 943 to 958 (GESEEEASIDLEDTGP) shows a compositional bias: acidic residues. Basic and acidic residues-rich tracts occupy residues 979–992 (EPAK…RTET), 1039–1116 (EANR…EETK), and 1173–1212 (LRKE…RQDG). Positions 1213–1225 (EGALAAPEAEPAG) are enriched in low complexity. Residues 1289–1300 (AVDEDPEEEEDK) show a composition bias toward acidic residues. Basic and acidic residues-rich tracts occupy residues 1464–1487 (GRQE…RELS) and 1502–1511 (DFTETREKQQ). The span at 1517–1530 (ESETADVSPNNVQV) shows a compositional bias: polar residues.

Interacts with CLTC/clathrin heavy chain 1, AP2A2/AP-2 complex subunit alpha-2, and PIK3C2A/phosphatidylinositol 4-phosphate 3-kinase C2 domain-containing subunit alpha. As to expression, expressed in dopaminergic and serotoninergic neurons.

The protein resides in the cell projection. It localises to the cilium. It is found in the cytoplasm. Functionally, component of the primary cilium that controls cilium formation and length. May function within retrograde intraflagellar transport (IFT)-associated pathways to remove signaling proteins from primary cilia. Also involved in neuronal vesicle biogenesis and neurotransmitter vesicular function. This chain is Glutamate-rich protein 3, found in Homo sapiens (Human).